A 586-amino-acid chain; its full sequence is A-type ATP synthase subunit A (586 aa).

ATP is bound at residue 232–239; the sequence is GPFGSGKT.

Belongs to the ATPase alpha/beta chains family. Has multiple subunits with at least A(3), B(3), C, D, E, F, H, I and proteolipid K(x).

Its subcellular location is the cell membrane. It catalyses the reaction ATP + H2O + 4 H(+)(in) = ADP + phosphate + 5 H(+)(out). Its function is as follows. Component of the A-type ATP synthase that produces ATP from ADP in the presence of a proton gradient across the membrane. The A chain is the catalytic subunit. The chain is A-type ATP synthase subunit A from Methanococcus maripaludis (strain DSM 14266 / JCM 13030 / NBRC 101832 / S2 / LL).